Here is an 857-residue protein sequence, read N- to C-terminus: DNA mismatch repair protein MutS (857 aa).

Gly608–Ser615 serves as a coordination point for ATP.

It belongs to the DNA mismatch repair MutS family.

Functionally, this protein is involved in the repair of mismatches in DNA. It is possible that it carries out the mismatch recognition step. This protein has a weak ATPase activity. In Lactobacillus gasseri (strain ATCC 33323 / DSM 20243 / BCRC 14619 / CIP 102991 / JCM 1131 / KCTC 3163 / NCIMB 11718 / NCTC 13722 / AM63), this protein is DNA mismatch repair protein MutS.